Reading from the N-terminus, the 32-residue chain is U6-ctenitoxin-Pr1a (32 aa).

3 disulfide bridges follow: cysteine 3-cysteine 17, cysteine 10-cysteine 21, and cysteine 16-cysteine 30.

As to expression, expressed by the venom gland.

The protein localises to the secreted. This Phoneutria reidyi (Brazilian Amazonian armed spider) protein is U6-ctenitoxin-Pr1a.